Here is a 750-residue protein sequence, read N- to C-terminus: MKWTKRVIRYATKNRKSPAENRRRVGKSLSLLSVFVFAIFLVNFAVIIGTGTRFGTDLAKEAKKVHQTTRTVPAKRGTIYDRNGVPIAEDATSYNVYAVIDENYKSATGKILYVEKTQFNKVAEVFHKYLDMEESYVREQLSQPNLKQVSFGAKGNGITYANMMSIKKELEAAEVKGIDFTTSPNRSYPNGQFASSFIGLAQLHENEDGSKSLLGTSGMESSLNSILAGTDGIITYEKDRLGNIVPGTEQVSQRTMDGKDVYTTISSPLQSFMETQMDAFQEKVKGKYMTATLVSAKTGEILATTQRPTFDADTKEGITEDFVWRDILYQSNYEPGSTMKVMMLAAAIDNNTFPGGEVFNSSELKIADATIRDWDVNEGLTGGRTMTFSQGFAHSSNVGMTLLEQKMGDATWLDYLNRFKFGVPTRFGLTDEYAGQLPADNIVNIAQSSFGQGISVTQTQMIRAFTAIANDGVMLEPKFISAIYDPNDQTARKSQKEIVGNPVSKDAASLTRTNMVLVGTDPVYGTMYNHSTGKPTVTVPGQNVALKSGTAQIADEKNGGYLVGLTDYIFSAVSMSPAENPDFILYVTVQQPEHYSGIQLGEFANPILERASAMKDSLNLQTTAKALEQVSQQSPYPMPSVKDISPGDLAEELRRNLVQPIVVGTGTKIKNSSAEEGKNLAPNQQVLILSDKAEEVPDMYGWTKETAETLAKWLNIELEFQGSGSTVQKQDVRANTAIKDIKKITLTLGD.

A helical transmembrane segment spans residues 29-49 (LSLLSVFVFAIFLVNFAVIIG). Serine 337 functions as the Acyl-ester intermediate in the catalytic mechanism. PASTA domains are found at residues 632–691 (QQSP…ILSD) and 692–750 (KAEE…TLGD).

This sequence belongs to the transpeptidase family.

The protein resides in the cell membrane. Functionally, a transpeptidase that forms peptide cross-links between adjacent glycan strands in cell wall peptidoglycan (PG). Part of the divisome machinery that synthesizes the septal cross wall. Beta-lactams inactivate the PBPs by acylating an essential serine residue in the active site of these proteins. The protein is Penicillin-binding protein 2x (pbpX) of Streptococcus pneumoniae serotype 4 (strain ATCC BAA-334 / TIGR4).